A 567-amino-acid polypeptide reads, in one-letter code: Oxygen-dependent choline dehydrogenase (567 aa).

Residue 6-35 participates in FAD binding; that stretch reads DYIIVGAGSAGNTLATRLTEDEGVTVLLLE. Histidine 475 functions as the Proton acceptor in the catalytic mechanism.

Belongs to the GMC oxidoreductase family. It depends on FAD as a cofactor.

The catalysed reaction is choline + A = betaine aldehyde + AH2. It carries out the reaction betaine aldehyde + NAD(+) + H2O = glycine betaine + NADH + 2 H(+). It participates in amine and polyamine biosynthesis; betaine biosynthesis via choline pathway; betaine aldehyde from choline (cytochrome c reductase route): step 1/1. Involved in the biosynthesis of the osmoprotectant glycine betaine. Catalyzes the oxidation of choline to betaine aldehyde and betaine aldehyde to glycine betaine at the same rate. The chain is Oxygen-dependent choline dehydrogenase from Pseudomonas fluorescens (strain SBW25).